Here is a 373-residue protein sequence, read N- to C-terminus: Histone-lysine N-methyltransferase SETD7 (373 aa).

Residues 1–20 (MDSDDDNMEEVVEGPLDEDD) are disordered. MORN repeat units follow at residues 36–58 (FEGH…DGST), 59–81 (LEGF…DGGA), and 106–128 (FRGR…DGAC). An SET domain is found at 214-336 (QRVYVGQSLI…KDEELTVAYG (123 aa)). S-adenosyl-L-methionine is bound by residues 226 to 228 (AGE), N296, and H297.

It belongs to the class V-like SAM-binding methyltransferase superfamily. Histone-lysine methyltransferase family. SET7 subfamily.

Its subcellular location is the nucleus. The protein localises to the chromosome. It carries out the reaction L-lysyl(4)-[histone H3] + S-adenosyl-L-methionine = N(6)-methyl-L-lysyl(4)-[histone H3] + S-adenosyl-L-homocysteine + H(+). The catalysed reaction is L-lysyl-[protein] + S-adenosyl-L-methionine = N(6)-methyl-L-lysyl-[protein] + S-adenosyl-L-homocysteine + H(+). Functionally, histone methyltransferase that specifically monomethylates 'Lys-4' of histone H3. H3 'Lys-4' methylation represents a specific tag for epigenetic transcriptional activation. Plays a central role in the transcriptional activation of genes. Also has methyltransferase activity toward non-histone proteins. This Danio rerio (Zebrafish) protein is Histone-lysine N-methyltransferase SETD7 (setd7).